The primary structure comprises 1226 residues: AF4/FMR2 family member 3 (1226 aa).

The segment covering R24–Q37 has biased composition (basic and acidic residues). Disordered regions lie at residues R24–L65, S116–Q164, E197–N299, K323–Y496, and I523–A728. Polar residues predominate over residues D42–L52. Residues S123–T132 show a composition bias toward low complexity. Composition is skewed to polar residues over residues L251–C261 and K334–N344. Low complexity predominate over residues Q381 to L392. Over residues A396–P408 the composition is skewed to polar residues. Positions S409–S445 are enriched in low complexity. Positions Q485–Y496 are enriched in polar residues. Residues I523 to P533 are compositionally biased toward basic and acidic residues. 2 stretches are compositionally biased toward low complexity: residues P550 to A561 and C569 to A579. The span at R589–E607 shows a compositional bias: basic and acidic residues. A compositionally biased stretch (low complexity) spans T668–D678. The segment covering K692–D705 has biased composition (polar residues). The residue at position 755 (S755) is a Phosphoserine. Disordered stretches follow at residues P783–N856, P879–K964, and A1100–N1138. Over residues R830 to S842 the composition is skewed to basic and acidic residues. Polar residues predominate over residues S843 to N856. Position 881 is a phosphoserine (S881). Polar residues predominate over residues E894 to T909.

Belongs to the AF4 family. As to expression, preferentially expressed in lymphoid tissues, highest levels being found in the thymus.

It localises to the nucleus. Putative transcription activator that may function in lymphoid development and oncogenesis. Binds, in vitro, to double-stranded DNA. The polypeptide is AF4/FMR2 family member 3 (Homo sapiens (Human)).